The sequence spans 660 residues: GTP-binding protein BRASSINAZOLE INSENSITIVE PALE GREEN 2, chloroplastic (660 aa).

A chloroplast-targeting transit peptide spans 1–53; sequence MVVLISSTVTICNVKPKLEDGNFRVSRLIHRPEVPFFSGLSNEKKKKCAVSVM. Disordered regions lie at residues 127–158 and 191–212; these read EGDE…DDEM and NDVE…TEEK. A compositionally biased stretch (acidic residues) spans 130–158; the sequence is EHVENDELAGFEMVDDDADEEEEGEDDEM. One can recognise a CP-type G domain in the interval 273–457; the sequence is STRLIKPMSN…MYDTPGLLHP (185 aa).

The protein belongs to the TRAFAC class YlqF/YawG GTPase family. Binds to chloroplast 16S and 23S ribosomal RNAs. As to expression, mostly expressed in stems, petioles, leaves and flowers and, at low levels, also in roots.

It localises to the plastid. The protein localises to the chloroplast stroma. Its function is as follows. Required for brassinosteroid- (BR) mediated post-transcriptional and translational regulation in the chloroplast, including accumulation of chloroplast rRNA. Involved in chloroplast differentiation. The protein is GTP-binding protein BRASSINAZOLE INSENSITIVE PALE GREEN 2, chloroplastic of Arabidopsis thaliana (Mouse-ear cress).